We begin with the raw amino-acid sequence, 61 residues long: Large ribosomal subunit protein uL29 (61 aa).

It belongs to the universal ribosomal protein uL29 family.

The sequence is that of Large ribosomal subunit protein uL29 from Stenotrophomonas maltophilia (strain K279a).